A 135-amino-acid polypeptide reads, in one-letter code: HVA22-like protein d (135 aa).

The next 3 membrane-spanning stretches (helical) occupy residues 11–31, 42–62, and 63–83; these read LHSG…SVIA, QWLA…ILQS, and LIEW…WLVL.

Belongs to the DP1 family. In terms of tissue distribution, predominantly expressed in flower buds.

Its subcellular location is the membrane. The chain is HVA22-like protein d (HVA22D) from Arabidopsis thaliana (Mouse-ear cress).